The following is a 163-amino-acid chain: Peptide methionine sulfoxide reductase MsrA (163 aa).

Cysteine 10 is an active-site residue.

It belongs to the MsrA Met sulfoxide reductase family.

It catalyses the reaction L-methionyl-[protein] + [thioredoxin]-disulfide + H2O = L-methionyl-(S)-S-oxide-[protein] + [thioredoxin]-dithiol. It carries out the reaction [thioredoxin]-disulfide + L-methionine + H2O = L-methionine (S)-S-oxide + [thioredoxin]-dithiol. Has an important function as a repair enzyme for proteins that have been inactivated by oxidation. Catalyzes the reversible oxidation-reduction of methionine sulfoxide in proteins to methionine. The polypeptide is Peptide methionine sulfoxide reductase MsrA (Vesicomyosocius okutanii subsp. Calyptogena okutanii (strain HA)).